The following is a 27-amino-acid chain: Secretin (27 aa).

At methionine 27 the chain carries Methionine amide.

This sequence belongs to the glucagon family.

The protein resides in the secreted. Functionally, hormone involved in different processes, such as regulation of the pH of the duodenal content, food intake and water homeostasis. Exerts its biological effects by binding to secretin receptor (SCTR), a G-protein coupled receptor expressed in the basolateral domain of several cells. In Gallus gallus (Chicken), this protein is Secretin.